Reading from the N-terminus, the 406-residue chain is Arginine deiminase (406 aa).

The active-site Amidino-cysteine intermediate is Cys396.

The protein belongs to the arginine deiminase family.

The protein resides in the cytoplasm. It carries out the reaction L-arginine + H2O = L-citrulline + NH4(+). It participates in amino-acid degradation; L-arginine degradation via ADI pathway; carbamoyl phosphate from L-arginine: step 1/2. The chain is Arginine deiminase from Salmonella typhimurium (strain LT2 / SGSC1412 / ATCC 700720).